Consider the following 380-residue polypeptide: Cytochrome b (380 aa).

4 helical membrane passes run 34-54, 78-99, 114-134, and 179-199; these read FGSL…LLAT, WLIR…YLHI, WNTG…GYVL, and FFAL…IHLT. Positions 84 and 98 each coordinate heme b. 2 residues coordinate heme b: histidine 183 and histidine 197. Position 202 (histidine 202) interacts with a ubiquinone. 4 consecutive transmembrane segments (helical) span residues 227 to 247, 289 to 309, 321 to 341, and 348 to 368; these read LKDI…ALFS, LGGV…PLLH, FSQF…WVGS, and FIII…LLFP.

It belongs to the cytochrome b family. In terms of assembly, the cytochrome bc1 complex contains 11 subunits: 3 respiratory subunits (MT-CYB, CYC1 and UQCRFS1), 2 core proteins (UQCRC1 and UQCRC2) and 6 low-molecular weight proteins (UQCRH/QCR6, UQCRB/QCR7, UQCRQ/QCR8, UQCR10/QCR9, UQCR11/QCR10 and a cleavage product of UQCRFS1). This cytochrome bc1 complex then forms a dimer. The cofactor is heme b.

The protein localises to the mitochondrion inner membrane. Its function is as follows. Component of the ubiquinol-cytochrome c reductase complex (complex III or cytochrome b-c1 complex) that is part of the mitochondrial respiratory chain. The b-c1 complex mediates electron transfer from ubiquinol to cytochrome c. Contributes to the generation of a proton gradient across the mitochondrial membrane that is then used for ATP synthesis. In Alca torda (Razorbill), this protein is Cytochrome b (MT-CYB).